The sequence spans 890 residues: DNA mismatch repair protein MutS (890 aa).

607–614 is a binding site for ATP; it reads GPNMSGKS.

It belongs to the DNA mismatch repair MutS family.

Functionally, this protein is involved in the repair of mismatches in DNA. It is possible that it carries out the mismatch recognition step. This protein has a weak ATPase activity. In Bacillus mycoides (strain KBAB4) (Bacillus weihenstephanensis), this protein is DNA mismatch repair protein MutS.